The chain runs to 229 residues: Large ribosomal subunit protein uL1 (229 aa).

This sequence belongs to the universal ribosomal protein uL1 family. In terms of assembly, part of the 50S ribosomal subunit.

Binds directly to 23S rRNA. The L1 stalk is quite mobile in the ribosome, and is involved in E site tRNA release. Its function is as follows. Protein L1 is also a translational repressor protein, it controls the translation of the L11 operon by binding to its mRNA. The polypeptide is Large ribosomal subunit protein uL1 (Histophilus somni (strain 2336) (Haemophilus somnus)).